Reading from the N-terminus, the 217-residue chain is Large ribosomal subunit protein uL1 (217 aa).

Belongs to the universal ribosomal protein uL1 family. In terms of assembly, part of the 50S ribosomal subunit.

Binds directly to 23S rRNA. Probably involved in E site tRNA release. Its function is as follows. Protein L1 is also a translational repressor protein, it controls the translation of its operon by binding to its mRNA. The protein is Large ribosomal subunit protein uL1 of Hyperthermus butylicus (strain DSM 5456 / JCM 9403 / PLM1-5).